A 204-amino-acid chain; its full sequence is Holliday junction branch migration complex subunit RuvA (204 aa).

The domain I stretch occupies residues 1-64; it reads MIAQLKGSLA…EDAFLLYGFH (64 aa). The segment at 65–143 is domain II; sequence SESQRKVFNL…ALPMAAPTTA (79 aa). A flexible linker region spans residues 144–154; sequence IGAATMAANPA. Positions 154 to 204 are domain III; the sequence is AGLREEVASALLNLGYKPPQVDAALAKLFSAGEITDISVALKGALKLLAPA.

Belongs to the RuvA family. As to quaternary structure, homotetramer. Forms an RuvA(8)-RuvB(12)-Holliday junction (HJ) complex. HJ DNA is sandwiched between 2 RuvA tetramers; dsDNA enters through RuvA and exits via RuvB. An RuvB hexamer assembles on each DNA strand where it exits the tetramer. Each RuvB hexamer is contacted by two RuvA subunits (via domain III) on 2 adjacent RuvB subunits; this complex drives branch migration. In the full resolvosome a probable DNA-RuvA(4)-RuvB(12)-RuvC(2) complex forms which resolves the HJ.

The protein resides in the cytoplasm. In terms of biological role, the RuvA-RuvB-RuvC complex processes Holliday junction (HJ) DNA during genetic recombination and DNA repair, while the RuvA-RuvB complex plays an important role in the rescue of blocked DNA replication forks via replication fork reversal (RFR). RuvA specifically binds to HJ cruciform DNA, conferring on it an open structure. The RuvB hexamer acts as an ATP-dependent pump, pulling dsDNA into and through the RuvAB complex. HJ branch migration allows RuvC to scan DNA until it finds its consensus sequence, where it cleaves and resolves the cruciform DNA. The polypeptide is Holliday junction branch migration complex subunit RuvA (Magnetococcus marinus (strain ATCC BAA-1437 / JCM 17883 / MC-1)).